The sequence spans 85 residues: Small ribosomal subunit protein bS16 (85 aa).

Belongs to the bacterial ribosomal protein bS16 family.

The chain is Small ribosomal subunit protein bS16 from Pseudomonas savastanoi pv. phaseolicola (strain 1448A / Race 6) (Pseudomonas syringae pv. phaseolicola (strain 1448A / Race 6)).